Reading from the N-terminus, the 729-residue chain is Phosphoribosylformylglycinamidine synthase subunit PurL (729 aa).

H54 is an active-site residue. ATP contacts are provided by Y57 and K96. E98 serves as a coordination point for Mg(2+). Substrate is bound by residues 99–102 and R121; that span reads SHNH. Catalysis depends on H100, which acts as the Proton acceptor. Residue D122 coordinates Mg(2+). Q245 is a substrate binding site. D273 provides a ligand contact to Mg(2+). 317 to 319 contacts substrate; that stretch reads ETQ. The ATP site is built by D495 and G532. N533 serves as a coordination point for Mg(2+). S535 is a binding site for substrate.

It belongs to the FGAMS family. As to quaternary structure, monomer. Part of the FGAM synthase complex composed of 1 PurL, 1 PurQ and 2 PurS subunits.

Its subcellular location is the cytoplasm. It carries out the reaction N(2)-formyl-N(1)-(5-phospho-beta-D-ribosyl)glycinamide + L-glutamine + ATP + H2O = 2-formamido-N(1)-(5-O-phospho-beta-D-ribosyl)acetamidine + L-glutamate + ADP + phosphate + H(+). The protein operates within purine metabolism; IMP biosynthesis via de novo pathway; 5-amino-1-(5-phospho-D-ribosyl)imidazole from N(2)-formyl-N(1)-(5-phospho-D-ribosyl)glycinamide: step 1/2. In terms of biological role, part of the phosphoribosylformylglycinamidine synthase complex involved in the purines biosynthetic pathway. Catalyzes the ATP-dependent conversion of formylglycinamide ribonucleotide (FGAR) and glutamine to yield formylglycinamidine ribonucleotide (FGAM) and glutamate. The FGAM synthase complex is composed of three subunits. PurQ produces an ammonia molecule by converting glutamine to glutamate. PurL transfers the ammonia molecule to FGAR to form FGAM in an ATP-dependent manner. PurS interacts with PurQ and PurL and is thought to assist in the transfer of the ammonia molecule from PurQ to PurL. The sequence is that of Phosphoribosylformylglycinamidine synthase subunit PurL from Staphylococcus aureus (strain USA300).